A 157-amino-acid chain; its full sequence is SsrA-binding protein (157 aa).

Residues 132-157 form a disordered region; that stretch reads KLHDKRETEKKRDWSREKGRLLRSRG. The segment covering 135-151 has biased composition (basic and acidic residues); that stretch reads DKRETEKKRDWSREKGR.

This sequence belongs to the SmpB family.

The protein resides in the cytoplasm. Required for rescue of stalled ribosomes mediated by trans-translation. Binds to transfer-messenger RNA (tmRNA), required for stable association of tmRNA with ribosomes. tmRNA and SmpB together mimic tRNA shape, replacing the anticodon stem-loop with SmpB. tmRNA is encoded by the ssrA gene; the 2 termini fold to resemble tRNA(Ala) and it encodes a 'tag peptide', a short internal open reading frame. During trans-translation Ala-aminoacylated tmRNA acts like a tRNA, entering the A-site of stalled ribosomes, displacing the stalled mRNA. The ribosome then switches to translate the ORF on the tmRNA; the nascent peptide is terminated with the 'tag peptide' encoded by the tmRNA and targeted for degradation. The ribosome is freed to recommence translation, which seems to be the essential function of trans-translation. The chain is SsrA-binding protein from Rhodopseudomonas palustris (strain ATCC BAA-98 / CGA009).